Reading from the N-terminus, the 162-residue chain is ATP synthase subunit b (162 aa).

The chain crosses the membrane as a helical span at residues 6–28; it reads LVTFVLTIVNILVLFYLLKRFLF.

Belongs to the ATPase B chain family. F-type ATPases have 2 components, F(1) - the catalytic core - and F(0) - the membrane proton channel. F(1) has five subunits: alpha(3), beta(3), gamma(1), delta(1), epsilon(1). F(0) has three main subunits: a(1), b(2) and c(10-14). The alpha and beta chains form an alternating ring which encloses part of the gamma chain. F(1) is attached to F(0) by a central stalk formed by the gamma and epsilon chains, while a peripheral stalk is formed by the delta and b chains.

The protein localises to the cell membrane. Its function is as follows. F(1)F(0) ATP synthase produces ATP from ADP in the presence of a proton or sodium gradient. F-type ATPases consist of two structural domains, F(1) containing the extramembraneous catalytic core and F(0) containing the membrane proton channel, linked together by a central stalk and a peripheral stalk. During catalysis, ATP synthesis in the catalytic domain of F(1) is coupled via a rotary mechanism of the central stalk subunits to proton translocation. Functionally, component of the F(0) channel, it forms part of the peripheral stalk, linking F(1) to F(0). This chain is ATP synthase subunit b, found in Natranaerobius thermophilus (strain ATCC BAA-1301 / DSM 18059 / JW/NM-WN-LF).